A 387-amino-acid polypeptide reads, in one-letter code: Gibberellic acid methyltransferase 2 (387 aa).

Residue tyrosine 33 participates in S-adenosyl-L-homocysteine binding. Position 40 (glutamine 40) interacts with gibberellin A4. 6 residues coordinate S-adenosyl-L-homocysteine: cysteine 74, asparagine 79, aspartate 113, leucine 114, serine 146, and phenylalanine 147. Gibberellin A4 is bound by residues histidine 167 and tryptophan 168. Mg(2+)-binding residues include asparagine 185, arginine 275, aspartate 276, phenylalanine 278, and asparagine 279.

This sequence belongs to the methyltransferase superfamily. Type-7 methyltransferase family. SABATH subfamily. Mg(2+) serves as cofactor. As to expression, expressed in siliques and germinating seeds. Not detected in leaves, stems, flowers and roots.

The enzyme catalyses gibberellin A4 + S-adenosyl-L-methionine = O-methyl gibberellin A4 + S-adenosyl-L-homocysteine. Down-regulated by Zn(2+), Cu(2+) and Fe(3+). No effect of K(+), NH(4+), Na(+), Ca(2+), Mg(2+), Mn(2+) and Fe(2+). In terms of biological role, methylates the carboxyl group of several gibberellins (GAs). Substrate preference is GA4 &gt; GA34 &gt; GA9 &gt; GA3 &gt; GA1 &gt; GA51 &gt; GA20. No activity with diterpenes abietic acid and ent-kaurenoic acid. This is Gibberellic acid methyltransferase 2 (GAMT2) from Arabidopsis thaliana (Mouse-ear cress).